A 285-amino-acid chain; its full sequence is Probable endonuclease 4 (285 aa).

Positions 69, 109, 145, 179, 182, 216, 229, 231, and 261 each coordinate Zn(2+).

Belongs to the AP endonuclease 2 family. Requires Zn(2+) as cofactor.

It carries out the reaction Endonucleolytic cleavage to 5'-phosphooligonucleotide end-products.. In terms of biological role, endonuclease IV plays a role in DNA repair. It cleaves phosphodiester bonds at apurinic or apyrimidinic (AP) sites, generating a 3'-hydroxyl group and a 5'-terminal sugar phosphate. The protein is Probable endonuclease 4 of Escherichia fergusonii (strain ATCC 35469 / DSM 13698 / CCUG 18766 / IAM 14443 / JCM 21226 / LMG 7866 / NBRC 102419 / NCTC 12128 / CDC 0568-73).